Reading from the N-terminus, the 546-residue chain is Chaperonin GroEL (546 aa).

ATP contacts are provided by residues 29-32, K50, 86-90, G414, and D492; these read TMGP and DGTTT.

This sequence belongs to the chaperonin (HSP60) family. As to quaternary structure, forms a cylinder of 14 subunits composed of two heptameric rings stacked back-to-back. Interacts with the co-chaperonin GroES.

Its subcellular location is the cytoplasm. It carries out the reaction ATP + H2O + a folded polypeptide = ADP + phosphate + an unfolded polypeptide.. Functionally, together with its co-chaperonin GroES, plays an essential role in assisting protein folding. The GroEL-GroES system forms a nano-cage that allows encapsulation of the non-native substrate proteins and provides a physical environment optimized to promote and accelerate protein folding. This is Chaperonin GroEL from Helicobacter pylori (strain Shi470).